A 216-amino-acid polypeptide reads, in one-letter code: MNPDAKRLGDVRRKVTGIGDHTSHGGYLDGQLLVAMPVMGDSRFERSVIYLCAHSAEGAMGIMVNRPAGSIDFPQLLMQLNIIEKGDQISLPDSAETMKVLSGGPVDTGRGFVLHSSDYFIANATLKINDGVCLTTTIDILKAIAKGNGPKHALLALGYAGWRAGQLEEEIQDNGWLHCDADPELIFGDNVEDKYDLALRKIGIDPGMLSNAAGHA.

It belongs to the UPF0301 (AlgH) family.

The chain is UPF0301 protein BBta_6966 from Bradyrhizobium sp. (strain BTAi1 / ATCC BAA-1182).